The sequence spans 140 residues: Ig heavy chain V region 93G7 (140 aa).

Positions 1 to 19 (MGWSFIFLFLLSVTAGVHS) are cleaved as a signal peptide. The 120-residue stretch at 20–139 (EVQLQQSGAE…WGQGTPLTVS (120 aa)) folds into the Ig-like domain.

This chain is Ig heavy chain V region 93G7, found in Mus musculus (Mouse).